We begin with the raw amino-acid sequence, 196 residues long: Putative NADH dehydrogenase/NAD(P)H nitroreductase xcc-b100_0585 (196 aa).

Belongs to the nitroreductase family. HadB/RutE subfamily. It depends on FMN as a cofactor.

This Xanthomonas campestris pv. campestris (strain B100) protein is Putative NADH dehydrogenase/NAD(P)H nitroreductase xcc-b100_0585.